We begin with the raw amino-acid sequence, 130 residues long: Small ribosomal subunit protein uS8 (130 aa).

It belongs to the universal ribosomal protein uS8 family. Part of the 30S ribosomal subunit. Contacts proteins S5 and S12.

In terms of biological role, one of the primary rRNA binding proteins, it binds directly to 16S rRNA central domain where it helps coordinate assembly of the platform of the 30S subunit. The sequence is that of Small ribosomal subunit protein uS8 from Buchnera aphidicola subsp. Acyrthosiphon kondoi (Acyrthosiphon kondoi symbiotic bacterium).